Reading from the N-terminus, the 389-residue chain is F-box protein At3g19880 (389 aa).

The 48-residue stretch at 2–49 (TMMSDLTQDLVEEILSRVPITSLGAVRSTCKGWNALSKERILCIGEPK) folds into the F-box domain.

The polypeptide is F-box protein At3g19880 (Arabidopsis thaliana (Mouse-ear cress)).